Consider the following 597-residue polypeptide: Centrosomal protein of 70 kDa (597 aa).

Residues 1 to 24 (MFPVAPKPQDSNQPSDRLMTEKQQ) form a disordered region. 2 coiled-coil regions span residues 66-179 (MRQN…QTEV) and 254-320 (TYKG…QELI). Residues 483-516 (NGVYPRMNEVYTRLGEMNNAVRNLQELLELDSSS) form a TPR repeat.

Directly interacts with tubulin-gamma; this interaction determines centrosomal localization.

It localises to the cytoplasm. Its subcellular location is the cytoskeleton. The protein resides in the microtubule organizing center. The protein localises to the centrosome. Its function is as follows. Plays a role in the organization of both preexisting and nascent microtubules in interphase cells. During mitosis, required for the organization and orientation of the mitotic spindle. In Macaca fascicularis (Crab-eating macaque), this protein is Centrosomal protein of 70 kDa (CEP70).